A 654-amino-acid polypeptide reads, in one-letter code: tRNA uridine 5-carboxymethylaminomethyl modification enzyme MnmG (654 aa).

17–22 lines the FAD pocket; it reads GGGHAG. 289–303 is an NAD(+) binding site; sequence GPRYCPSIEDKIVKF.

The protein belongs to the MnmG family. Homodimer. Heterotetramer of two MnmE and two MnmG subunits. It depends on FAD as a cofactor.

The protein resides in the cytoplasm. Functionally, NAD-binding protein involved in the addition of a carboxymethylaminomethyl (cmnm) group at the wobble position (U34) of certain tRNAs, forming tRNA-cmnm(5)s(2)U34. The polypeptide is tRNA uridine 5-carboxymethylaminomethyl modification enzyme MnmG (Prochlorococcus marinus subsp. pastoris (strain CCMP1986 / NIES-2087 / MED4)).